The primary structure comprises 838 residues: Leucine--tRNA ligase 1 (838 aa).

Positions 40 to 51 (PYPSGAGLHVGH) match the 'HIGH' region motif. Positions 608–612 (KMSKS) match the 'KMSKS' region motif. Lys611 provides a ligand contact to ATP.

Belongs to the class-I aminoacyl-tRNA synthetase family.

Its subcellular location is the cytoplasm. The enzyme catalyses tRNA(Leu) + L-leucine + ATP = L-leucyl-tRNA(Leu) + AMP + diphosphate. This chain is Leucine--tRNA ligase 1, found in Rhizobium johnstonii (strain DSM 114642 / LMG 32736 / 3841) (Rhizobium leguminosarum bv. viciae).